We begin with the raw amino-acid sequence, 270 residues long: Putative pyruvate, phosphate dikinase regulatory protein (270 aa).

An ADP-binding site is contributed by 149 to 156 (GVSRTSKT).

Belongs to the pyruvate, phosphate/water dikinase regulatory protein family. PDRP subfamily.

It carries out the reaction N(tele)-phospho-L-histidyl/L-threonyl-[pyruvate, phosphate dikinase] + ADP = N(tele)-phospho-L-histidyl/O-phospho-L-threonyl-[pyruvate, phosphate dikinase] + AMP + H(+). It catalyses the reaction N(tele)-phospho-L-histidyl/O-phospho-L-threonyl-[pyruvate, phosphate dikinase] + phosphate + H(+) = N(tele)-phospho-L-histidyl/L-threonyl-[pyruvate, phosphate dikinase] + diphosphate. Functionally, bifunctional serine/threonine kinase and phosphorylase involved in the regulation of the pyruvate, phosphate dikinase (PPDK) by catalyzing its phosphorylation/dephosphorylation. This Thermoanaerobacter pseudethanolicus (strain ATCC 33223 / 39E) (Clostridium thermohydrosulfuricum) protein is Putative pyruvate, phosphate dikinase regulatory protein.